Reading from the N-terminus, the 171-residue chain is Endoribonuclease YbeY (171 aa).

3 residues coordinate Zn(2+): histidine 126, histidine 130, and histidine 136.

The protein belongs to the endoribonuclease YbeY family. Zn(2+) serves as cofactor.

It is found in the cytoplasm. Functionally, single strand-specific metallo-endoribonuclease involved in late-stage 70S ribosome quality control and in maturation of the 3' terminus of the 16S rRNA. The protein is Endoribonuclease YbeY of Rhizobium etli (strain ATCC 51251 / DSM 11541 / JCM 21823 / NBRC 15573 / CFN 42).